The chain runs to 413 residues: Putative F-box protein At3g23970 (413 aa).

Positions 1 to 42 (MNIPPELTFEVLVRLPLKSLARFRSVRKEWKLVIDSEFFRDC) constitute an F-box domain.

The polypeptide is Putative F-box protein At3g23970 (Arabidopsis thaliana (Mouse-ear cress)).